Here is a 623-residue protein sequence, read N- to C-terminus: Arginine--tRNA ligase (623 aa).

Residues 116 to 126 (ANPIHPLHVGH) carry the 'HIGH' region motif.

Belongs to the class-I aminoacyl-tRNA synthetase family.

Its subcellular location is the cytoplasm. The enzyme catalyses tRNA(Arg) + L-arginine + ATP = L-arginyl-tRNA(Arg) + AMP + diphosphate. The protein is Arginine--tRNA ligase of Sulfurisphaera tokodaii (strain DSM 16993 / JCM 10545 / NBRC 100140 / 7) (Sulfolobus tokodaii).